A 334-amino-acid polypeptide reads, in one-letter code: Retinol dehydrogenase 13 (334 aa).

Position 2 is an N-acetylserine (Ser2). 45–51 (GANTGIG) is a binding site for NADP(+). Ser174 is a binding site for substrate. Tyr200 (proton acceptor) is an active-site residue.

This sequence belongs to the short-chain dehydrogenases/reductases (SDR) family.

It is found in the mitochondrion inner membrane. It carries out the reaction all-trans-retinol + NADP(+) = all-trans-retinal + NADPH + H(+). Its pathway is cofactor metabolism; retinol metabolism. In terms of biological role, retinol dehydrogenase with a clear preference for NADP. Oxidizes all-trans-retinol, but seems to reduce all-trans-retinal with much higher efficiency. Has no activity towards steroid. This Mus musculus (Mouse) protein is Retinol dehydrogenase 13 (Rdh13).